We begin with the raw amino-acid sequence, 94 residues long: Integration host factor subunit beta (94 aa).

The protein belongs to the bacterial histone-like protein family. As to quaternary structure, heterodimer of an alpha and a beta chain.

In terms of biological role, this protein is one of the two subunits of integration host factor, a specific DNA-binding protein that functions in genetic recombination as well as in transcriptional and translational control. The sequence is that of Integration host factor subunit beta from Xanthobacter autotrophicus (strain ATCC BAA-1158 / Py2).